A 414-amino-acid polypeptide reads, in one-letter code: Sec-independent protein translocase protein TatC (414 aa).

Positions M1–P21 are disordered. The next 6 helical transmembrane spans lie at I45–I65, G119–I139, I157–L177, F200–M220, I238–S258, and M259–I279. Residues I315 to L414 are disordered. The segment covering I323–G336 has biased composition (gly residues). Residues T345–P357 show a composition bias toward low complexity. Residues D403–L414 are compositionally biased toward polar residues.

This sequence belongs to the TatC family. The Tat system comprises two distinct complexes: a TatABC complex, containing multiple copies of TatA, TatB and TatC subunits, and a separate TatA complex, containing only TatA subunits. Substrates initially bind to the TatABC complex, which probably triggers association of the separate TatA complex to form the active translocon.

The protein localises to the cell membrane. Part of the twin-arginine translocation (Tat) system that transports large folded proteins containing a characteristic twin-arginine motif in their signal peptide across membranes. Together with TatB, TatC is part of a receptor directly interacting with Tat signal peptides. This is Sec-independent protein translocase protein TatC from Corynebacterium kroppenstedtii (strain DSM 44385 / JCM 11950 / CIP 105744 / CCUG 35717).